The following is a 248-amino-acid chain: Putative TrmH family tRNA/rRNA methyltransferase (248 aa).

S-adenosyl-L-methionine-binding residues include glycine 196, isoleucine 216, and leucine 225.

This sequence belongs to the class IV-like SAM-binding methyltransferase superfamily. RNA methyltransferase TrmH family.

The sequence is that of Putative TrmH family tRNA/rRNA methyltransferase from Staphylococcus aureus (strain COL).